The primary structure comprises 468 residues: Argininosuccinate lyase (468 aa).

It belongs to the lyase 1 family. Argininosuccinate lyase subfamily.

It is found in the cytoplasm. It carries out the reaction 2-(N(omega)-L-arginino)succinate = fumarate + L-arginine. The protein operates within amino-acid biosynthesis; L-arginine biosynthesis; L-arginine from L-ornithine and carbamoyl phosphate: step 3/3. In Sphingopyxis alaskensis (strain DSM 13593 / LMG 18877 / RB2256) (Sphingomonas alaskensis), this protein is Argininosuccinate lyase.